A 180-amino-acid chain; its full sequence is Membrane protein UL121 (180 aa).

An N-terminal signal peptide occupies residues 1–27 (MWGCGWSRILVLLLLMCMALMARGTYG). Residues 143–163 (LGLLYAVCLILSFSIVTAALW) form a helical membrane-spanning segment.

It belongs to the HHV-5 UL121 protein family.

Its subcellular location is the host membrane. The sequence is that of Membrane protein UL121 (UL121) from Human cytomegalovirus (strain Merlin) (HHV-5).